A 600-amino-acid chain; its full sequence is Adenine deaminase (600 aa).

Belongs to the metallo-dependent hydrolases superfamily. Adenine deaminase family. The cofactor is Mn(2+).

It carries out the reaction adenine + H2O + H(+) = hypoxanthine + NH4(+). The sequence is that of Adenine deaminase from Roseobacter denitrificans (strain ATCC 33942 / OCh 114) (Erythrobacter sp. (strain OCh 114)).